We begin with the raw amino-acid sequence, 251 residues long: Phosphate import ATP-binding protein PstB 2 (251 aa).

Residues 6 to 246 form the ABC transporter domain; the sequence is FNIENLDLFY…PRDDRTRGYV (241 aa). Residue 38 to 45 participates in ATP binding; it reads GPSGCGKS.

Belongs to the ABC transporter superfamily. Phosphate importer (TC 3.A.1.7) family. As to quaternary structure, the complex is composed of two ATP-binding proteins (PstB), two transmembrane proteins (PstC and PstA) and a solute-binding protein (PstS).

Its subcellular location is the cell inner membrane. The catalysed reaction is phosphate(out) + ATP + H2O = ADP + 2 phosphate(in) + H(+). Functionally, part of the ABC transporter complex PstSACB involved in phosphate import. Responsible for energy coupling to the transport system. The protein is Phosphate import ATP-binding protein PstB 2 of Vibrio cholerae serotype O1 (strain ATCC 39315 / El Tor Inaba N16961).